Consider the following 69-residue polypeptide: UPF0434 protein Rmet_0534 (69 aa).

It belongs to the UPF0434 family.

The protein is UPF0434 protein Rmet_0534 of Cupriavidus metallidurans (strain ATCC 43123 / DSM 2839 / NBRC 102507 / CH34) (Ralstonia metallidurans).